An 812-amino-acid polypeptide reads, in one-letter code: DNA translocase FtsK 1 (812 aa).

Over residues 1–11 (MTEKSHKKTAK) the composition is skewed to basic residues. The segment at 1–36 (MTEKSHKKTAKGRAGSPSPTSARNKKADNGARGNKV) is disordered. Positions 25-36 (KKADNGARGNKV) are enriched in basic and acidic residues. Helical transmembrane passes span 63-83 (IGDA…ISLI), 116-136 (VGYY…CVVL), 156-176 (IAAA…YFVL), 184-204 (LPVG…AWLL), and 210-230 (LLII…ISWL). Residues 231-812 (EFLNGAGRAV…RKILAHKDHL (582 aa)) are Cytoplasmic-facing. The region spanning 461–670 (GTPVVGDLAK…FTVQSKIDSR (210 aa)) is the FtsK domain. 481–486 (GSGKSV) is an ATP binding site.

Belongs to the FtsK/SpoIIIE/SftA family. In terms of assembly, homohexamer. Forms a ring that surrounds DNA.

It is found in the cell inner membrane. Functionally, essential cell division protein that coordinates cell division and chromosome segregation. The N-terminus is involved in assembly of the cell-division machinery. The C-terminus functions as a DNA motor that moves dsDNA in an ATP-dependent manner towards the dif recombination site, which is located within the replication terminus region. Translocation stops specifically at Xer-dif sites, where FtsK interacts with the Xer recombinase, allowing activation of chromosome unlinking by recombination. FtsK orienting polar sequences (KOPS) guide the direction of DNA translocation. FtsK can remove proteins from DNA as it translocates, but translocation stops specifically at XerCD-dif site, thereby preventing removal of XerC and XerD from dif. This chain is DNA translocase FtsK 1 (ftsK1), found in Neisseria meningitidis serogroup B (strain ATCC BAA-335 / MC58).